Here is a 168-residue protein sequence, read N- to C-terminus: ATP synthase subunit b (168 aa).

The chain crosses the membrane as a helical span at residues 10–30; that stretch reads STILGNFILVTASFAVLIILI.

Belongs to the ATPase B chain family. As to quaternary structure, F-type ATPases have 2 components, F(1) - the catalytic core - and F(0) - the membrane proton channel. F(1) has five subunits: alpha(3), beta(3), gamma(1), delta(1), epsilon(1). F(0) has three main subunits: a(1), b(2) and c(10-14). The alpha and beta chains form an alternating ring which encloses part of the gamma chain. F(1) is attached to F(0) by a central stalk formed by the gamma and epsilon chains, while a peripheral stalk is formed by the delta and b chains.

Its subcellular location is the cell membrane. F(1)F(0) ATP synthase produces ATP from ADP in the presence of a proton or sodium gradient. F-type ATPases consist of two structural domains, F(1) containing the extramembraneous catalytic core and F(0) containing the membrane proton channel, linked together by a central stalk and a peripheral stalk. During catalysis, ATP synthesis in the catalytic domain of F(1) is coupled via a rotary mechanism of the central stalk subunits to proton translocation. Its function is as follows. Component of the F(0) channel, it forms part of the peripheral stalk, linking F(1) to F(0). This Streptococcus suis (strain 98HAH33) protein is ATP synthase subunit b.